The primary structure comprises 269 residues: Calretinin (269 aa).

EF-hand domains lie at 14–49, 61–96, 105–140, 149–184, 193–228, and 230–265; these read LSAS…LESA, SLGD…EENF, GSSS…LLKK, KLQE…QENF, LSSE…LYEK, and KKEM…VLCS. 24 residues coordinate Ca(2+): Asp-27, Asp-29, Asn-31, Tyr-33, Glu-38, Asp-74, Asn-76, Asp-78, Lys-80, Glu-85, Asp-118, Asp-120, Ser-122, Tyr-124, Glu-129, Asp-162, Asn-164, Asp-166, Lys-168, Glu-173, Asp-206, Asp-208, Ser-210, and Glu-217.

The protein belongs to the calbindin family.

The protein localises to the synapse. Its subcellular location is the cell projection. It localises to the dendrite. Its function is as follows. Calcium-binding protein involved in calcium homeostasis and signal transduction. It plays a critical role in buffering intracellular calcium levels and modulating calcium-dependent signaling pathways. Predominantly expressed in specific neuronal populations, influences synaptic plasticity and neuronal excitability, contributing to learning and memory. During embryonic development, it facilitates neuronal differentiation and maturation. The polypeptide is Calretinin (CALB2) (Gallus gallus (Chicken)).